A 961-amino-acid polypeptide reads, in one-letter code: Glycine dehydrogenase (decarboxylating) (961 aa).

An N6-(pyridoxal phosphate)lysine modification is found at Lys709.

Belongs to the GcvP family. In terms of assembly, the glycine cleavage system is composed of four proteins: P, T, L and H. The cofactor is pyridoxal 5'-phosphate.

It catalyses the reaction N(6)-[(R)-lipoyl]-L-lysyl-[glycine-cleavage complex H protein] + glycine + H(+) = N(6)-[(R)-S(8)-aminomethyldihydrolipoyl]-L-lysyl-[glycine-cleavage complex H protein] + CO2. Functionally, the glycine cleavage system catalyzes the degradation of glycine. The P protein binds the alpha-amino group of glycine through its pyridoxal phosphate cofactor; CO(2) is released and the remaining methylamine moiety is then transferred to the lipoamide cofactor of the H protein. This Streptomyces griseus subsp. griseus (strain JCM 4626 / CBS 651.72 / NBRC 13350 / KCC S-0626 / ISP 5235) protein is Glycine dehydrogenase (decarboxylating).